A 200-amino-acid chain; its full sequence is Proteasome subunit beta 2 (200 aa).

Residues 1–7 (METKKTG) constitute a propeptide, removed in mature form; by autocatalysis. Residue T8 is the Nucleophile of the active site.

The protein belongs to the peptidase T1B family. The 20S proteasome core is composed of 14 alpha and 14 beta subunits that assemble into four stacked heptameric rings, resulting in a barrel-shaped structure. The two inner rings, each composed of seven catalytic beta subunits, are sandwiched by two outer rings, each composed of seven alpha subunits. The catalytic chamber with the active sites is on the inside of the barrel. Has a gated structure, the ends of the cylinder being occluded by the N-termini of the alpha-subunits. Is capped at one or both ends by the proteasome regulatory ATPase, PAN.

Its subcellular location is the cytoplasm. It carries out the reaction Cleavage of peptide bonds with very broad specificity.. The formation of the proteasomal ATPase PAN-20S proteasome complex, via the docking of the C-termini of PAN into the intersubunit pockets in the alpha-rings, triggers opening of the gate for substrate entry. Interconversion between the open-gate and close-gate conformations leads to a dynamic regulation of the 20S proteasome proteolysis activity. In terms of biological role, component of the proteasome core, a large protease complex with broad specificity involved in protein degradation. The protein is Proteasome subunit beta 2 of Thermococcus onnurineus (strain NA1).